The primary structure comprises 274 residues: MASLDNFDMAAGRTDGVADCVAFPGRFSTWTRALILAASAAGGGAAALAMDAAHVALVLGLAAFAGGLLSTWSPCGYSSISLLRPTGKGARAVLDWLPTFATHGLGYALGALILGTLLGAIGGIAGLSGFATSFGLGLLAVIGLAYGAHQLDFLRVPYPQRRAQVPHDARQRFPKWVVGGLYGLSLGLDYLTYVQTPLLYLVTAAAVLSGNVAEAVALIAIFNLGRYLPVAVNLLPVTDYQIQSWLGRNQERAAIADGAILTAVGAAFAMLALA.

7 helical membrane passes run 30–50, 52–72, 105–125, 127–147, 176–196, 202–222, and 253–273; these read WTRA…ALAM, AAHV…LSTW, LGYA…GGIA, LSGF…LAYG, WVVG…YVQT, VTAA…IAIF, and AAIA…MLAL.

The protein resides in the cell membrane. Its pathway is one-carbon metabolism; methylamine degradation. The protein is Methylamine utilization protein MauF (mauF) of Paracoccus versutus (Thiobacillus versutus).